A 231-amino-acid chain; its full sequence is Flagellar L-ring protein (231 aa).

A signal peptide spans 1–18 (MNRLLSVFALGGAVLLAG). C19 is lipidated: N-palmitoyl cysteine. C19 carries S-diacylglycerol cysteine lipidation.

It belongs to the FlgH family. In terms of assembly, the basal body constitutes a major portion of the flagellar organelle and consists of four rings (L,P,S, and M) mounted on a central rod.

It localises to the cell outer membrane. The protein localises to the bacterial flagellum basal body. Its function is as follows. Assembles around the rod to form the L-ring and probably protects the motor/basal body from shearing forces during rotation. This chain is Flagellar L-ring protein, found in Pseudomonas putida (strain ATCC 700007 / DSM 6899 / JCM 31910 / BCRC 17059 / LMG 24140 / F1).